The primary structure comprises 202 residues: Recoverin (202 aa).

Residue Gly-2 is the site of N-myristoyl glycine attachment. Cys-39 carries the post-translational modification Cysteine sulfenic acid (-SOH). EF-hand domains follow at residues 41–59 (SGRI…FFPD), 61–96 (DPKA…TTAG), 97–132 (KPTQ…IFKM), and 147–182 (TPEK…NKEI). 10 residues coordinate Ca(2+): Asp-74, Asn-76, Asp-78, Thr-80, Glu-85, Asp-110, Asp-112, Asn-114, Thr-116, and Glu-121. The segment at 189–192 (EPQK) is interaction with GRK1.

The protein belongs to the recoverin family. In terms of assembly, homodimer; disulfide-linked. Homodimerization is caused by prolonged intense illumination. May form a complex composed of RHO, GRK1 and RCVRN in a Ca(2+)-dependent manner; RCVRN prevents the interaction between GRK1 and RHO. Interacts (via C-terminus) with GRK1 (via N-terminus); the interaction is Ca(2+)-dependent. In terms of processing, the N-terminal glycine is linked to one of four different types of acyl groups. The most abundant is myristoleate (14:1), but 14:0, 14:2, and 12:0 acyl residues are also present. The Ca(2+) induced exposure of the myristoyl group, known as the calcium-myristoyl switch, promotes RCVRN binding to the photoreceptor cell membranes only when intracellular Ca(2+) concentration is high. Post-translationally, oxidation on Cys-39 occurs in response to prolonged intense illumination and results in the formation of disulfide homodimers, and to a lesser extent disulfide-linked heterodimers. As to expression, expressed in rod photoreceptors in the retina (at protein level).

It localises to the photoreceptor inner segment. The protein resides in the cell projection. Its subcellular location is the cilium. The protein localises to the photoreceptor outer segment. It is found in the photoreceptor outer segment membrane. It localises to the perikaryon. In terms of biological role, acts as a calcium sensor and regulates phototransduction of cone and rod photoreceptor cells. Modulates light sensitivity of cone photoreceptor in dark and dim conditions. In response to high Ca(2+) levels induced by low light levels, prolongs RHO/rhodopsin activation in rod photoreceptor cells by binding to and inhibiting GRK1-mediated phosphorylation of RHO/rhodopsin. Plays a role in scotopic vision/enhances vision in dim light by enhancing signal transfer between rod photoreceptors and rod bipolar cells. Improves rod photoreceptor sensitivity in dim light and mediates response of rod photoreceptors to facilitate detection of change and motion in bright light. The chain is Recoverin (Rcvrn) from Mus musculus (Mouse).